A 245-amino-acid polypeptide reads, in one-letter code: 3-deoxy-manno-octulosonate cytidylyltransferase (245 aa).

Belongs to the KdsB family.

The protein resides in the cytoplasm. It carries out the reaction 3-deoxy-alpha-D-manno-oct-2-ulosonate + CTP = CMP-3-deoxy-beta-D-manno-octulosonate + diphosphate. It functions in the pathway nucleotide-sugar biosynthesis; CMP-3-deoxy-D-manno-octulosonate biosynthesis; CMP-3-deoxy-D-manno-octulosonate from 3-deoxy-D-manno-octulosonate and CTP: step 1/1. It participates in bacterial outer membrane biogenesis; lipopolysaccharide biosynthesis. Functionally, activates KDO (a required 8-carbon sugar) for incorporation into bacterial lipopolysaccharide in Gram-negative bacteria. In Acidobacterium capsulatum (strain ATCC 51196 / DSM 11244 / BCRC 80197 / JCM 7670 / NBRC 15755 / NCIMB 13165 / 161), this protein is 3-deoxy-manno-octulosonate cytidylyltransferase.